Here is a 191-residue protein sequence, read N- to C-terminus: Protein GrpE (191 aa).

The tract at residues methionine 1 to leucine 49 is disordered. A compositionally biased stretch (acidic residues) spans glutamate 12–glutamate 21. Residues glutamate 30 to leucine 49 are compositionally biased toward basic and acidic residues.

The protein belongs to the GrpE family. As to quaternary structure, homodimer.

It is found in the cytoplasm. In terms of biological role, participates actively in the response to hyperosmotic and heat shock by preventing the aggregation of stress-denatured proteins, in association with DnaK and GrpE. It is the nucleotide exchange factor for DnaK and may function as a thermosensor. Unfolded proteins bind initially to DnaJ; upon interaction with the DnaJ-bound protein, DnaK hydrolyzes its bound ATP, resulting in the formation of a stable complex. GrpE releases ADP from DnaK; ATP binding to DnaK triggers the release of the substrate protein, thus completing the reaction cycle. Several rounds of ATP-dependent interactions between DnaJ, DnaK and GrpE are required for fully efficient folding. This Bacillus velezensis (strain DSM 23117 / BGSC 10A6 / LMG 26770 / FZB42) (Bacillus amyloliquefaciens subsp. plantarum) protein is Protein GrpE.